A 692-amino-acid polypeptide reads, in one-letter code: MANSQRKILVTSALPYANGPIHLGHMLEYIQTDIWSRFQKLRGHECHYICADDAHGTPIMLKAQQLGIEPEEMIAQVNKEHQQDFADFNIKFDNFHSTHSVENRELSGEIYLKLRDAGFIKTRTISQLFDPEKSMFLPDRFVKGTCPKCKSEDQYGDNCDNCGATYNPTDLIDPKSAVSGATPVMKDSEHFFFDLPAFENMLSEWTRSGAIQDEIANKLAEWFEQGLQQWDISRDAPYFGFEIPDAPGKYFYVWLDAPIGYMGSFKNLCDRREDLNFDDFWSKDSTAEVYHFIGKDIVNFHSLFWPAMLEGAGYRKPTSVFAHGYVTVNGAKMSKSKGTFIKARTYLDNLDPEYLRYYYAAKLSNRIDDLDLNLEDFAQRVNSDLVGKLVNLASRTAGFISKRFDGKLAKIADTTLEETFLAKQEVIADLYENREFGKAMREIMALADIANAYVADAAPWQLIKDEAKQDEAHQVCSNALNLFRILVTYLKPVLPKLADDVEAFLQFPLTWDNLGADLAGHEIAKFKALMQRIDMKNIEAIIEASKDNLQATTEAAPEKKAKKSAETADVAVDTRSPLESDPISDEISFDDFAKLDLRIARIAKAEHVPEANKLLKLQLDLGGETKQVFAGIKSAYAPEDLEGKLTVMVANLAPRKMRFGMSEGMVLAAGPGNKDLWILEPHEGAQPGMRVK.

The 'HIGH' region signature appears at 15–25 (PYANGPIHLGH). Zn(2+) is bound by residues Cys-146, Cys-149, Cys-159, and Cys-162. Residues 332-336 (KMSKS) carry the 'KMSKS' region motif. Residue Lys-335 participates in ATP binding. Positions 552–577 (TTEAAPEKKAKKSAETADVAVDTRSP) are disordered. Over residues 556 to 566 (APEKKAKKSAE) the composition is skewed to basic and acidic residues. Residues 591–692 (DFAKLDLRIA…EGAQPGMRVK (102 aa)) form the tRNA-binding domain.

The protein belongs to the class-I aminoacyl-tRNA synthetase family. MetG type 1 subfamily. Homodimer. Requires Zn(2+) as cofactor.

Its subcellular location is the cytoplasm. The catalysed reaction is tRNA(Met) + L-methionine + ATP = L-methionyl-tRNA(Met) + AMP + diphosphate. Its function is as follows. Is required not only for elongation of protein synthesis but also for the initiation of all mRNA translation through initiator tRNA(fMet) aminoacylation. The sequence is that of Methionine--tRNA ligase from Shewanella sediminis (strain HAW-EB3).